A 285-amino-acid polypeptide reads, in one-letter code: Probable endonuclease 4 (285 aa).

Residues His69, His109, Glu145, Asp179, His182, His216, Asp229, His231, and Glu261 each contribute to the Zn(2+) site.

This sequence belongs to the AP endonuclease 2 family. It depends on Zn(2+) as a cofactor.

It carries out the reaction Endonucleolytic cleavage to 5'-phosphooligonucleotide end-products.. Its function is as follows. Endonuclease IV plays a role in DNA repair. It cleaves phosphodiester bonds at apurinic or apyrimidinic (AP) sites, generating a 3'-hydroxyl group and a 5'-terminal sugar phosphate. The protein is Probable endonuclease 4 of Escherichia coli O127:H6 (strain E2348/69 / EPEC).